We begin with the raw amino-acid sequence, 188 residues long: Ion-translocating oxidoreductase complex subunit G (188 aa).

Over 1 to 9 the chain is Cytoplasmic; that stretch reads MSDSKEITK. Residues 10–30 form a helical membrane-spanning segment; that stretch reads VIVTMVVISAVAAALLALTYT. The Extracellular segment spans residues 31–188; that stretch reads PTQAQLKLLQ…AVDYVSAQEG (158 aa). T166 carries the post-translational modification FMN phosphoryl threonine.

The protein belongs to the RnfG family. In terms of assembly, the Rnf complex is probably composed of eight subunits, including RnfA, RnfB, RnfC, RnfD, RnfE and RnfG. The cofactor is FMN.

It is found in the cell membrane. Part of a membrane-bound complex that couples electron transfer with translocation of ions across the membrane. Catalyzes Na(+) transport, most probably coupled to electron transfer from reduced ferredoxin to methanophenazine and heterodisulfide reductase. Involved in heterodisulfide reduction during methanogenesis from acetate. The protein is Ion-translocating oxidoreductase complex subunit G of Methanosarcina acetivorans (strain ATCC 35395 / DSM 2834 / JCM 12185 / C2A).